The chain runs to 339 residues: Biotin synthase (339 aa).

One can recognise a Radical SAM core domain in the interval 55–282 (NAVQLSTLLS…KAVVRLSAGR (228 aa)). The [4Fe-4S] cluster site is built by Cys-70, Cys-74, and Cys-77. Positions 114, 145, 205, and 277 each coordinate [2Fe-2S] cluster.

The protein belongs to the radical SAM superfamily. Biotin synthase family. Homodimer. [4Fe-4S] cluster serves as cofactor. The cofactor is [2Fe-2S] cluster.

The catalysed reaction is (4R,5S)-dethiobiotin + (sulfur carrier)-SH + 2 reduced [2Fe-2S]-[ferredoxin] + 2 S-adenosyl-L-methionine = (sulfur carrier)-H + biotin + 2 5'-deoxyadenosine + 2 L-methionine + 2 oxidized [2Fe-2S]-[ferredoxin]. It functions in the pathway cofactor biosynthesis; biotin biosynthesis; biotin from 7,8-diaminononanoate: step 2/2. Catalyzes the conversion of dethiobiotin (DTB) to biotin by the insertion of a sulfur atom into dethiobiotin via a radical-based mechanism. This Burkholderia orbicola (strain MC0-3) protein is Biotin synthase.